A 103-amino-acid chain; its full sequence is Matrix Gla protein (103 aa).

The first 19 residues, 1–19 (MKSLVLLAILAALAVVTLC), serve as a signal peptide directing secretion. At Glu-21 the chain carries 4-carboxyglutamate. Phosphoserine occurs at positions 22, 25, and 28. Residues 51-97 (RAKVQERIRERSKPVHELNREACDDYRLCERYAMVYGYNAAYNRYFR) enclose the Gla domain. Glu-56, Glu-60, Glu-67, and Glu-71 each carry 4-carboxyglutamate. Cysteines 73 and 79 form a disulfide. Positions 97-103 (RERRGAK) are cleaved as a propeptide — removed in mature form; probably by carboxypeptidase N.

Belongs to the osteocalcin/matrix Gla protein family. In terms of processing, requires vitamin K-dependent gamma-carboxylation for its function.

Its subcellular location is the secreted. Functionally, associates with the organic matrix of bone and cartilage. Thought to act as an inhibitor of bone formation. In Pongo abelii (Sumatran orangutan), this protein is Matrix Gla protein (MGP).